The following is a 201-amino-acid chain: MPSFYKLRKKIWKSLYLLIIVGMLYIGYILIKSGYINEKNDINVTKKNLNLRDNKNYDLKYNVILQDSIFEGVNKNLNAYKIKTERAIKESGNKYKLDIINAIYNINQDQALIITAKEGFLDQESNILDLKNDIKLFFDEIIFNTNNARINLVNQNIYGNSSAKLLYKNSSITSDSFNTMDENNIIIFKGNVSTIIDLSDY.

Residues I11 to I31 traverse the membrane as a helical segment.

It localises to the membrane. This is an uncharacterized protein from Rickettsia prowazekii (strain Madrid E).